The chain runs to 126 residues: Protein ApaG (126 aa).

Residues 2–126 (SDPRYQVDVS…FRLAVPGALH (125 aa)) enclose the ApaG domain.

In Pseudomonas fluorescens (strain Pf0-1), this protein is Protein ApaG.